Here is a 404-residue protein sequence, read N- to C-terminus: CD209 antigen (404 aa).

The Cytoplasmic segment spans residues Met-1–Cys-37. 3 short sequence motifs (endocytosis signal) span residues Leu-14–Leu-15, Glu-16–Glu-18, and Tyr-31–Leu-34. A helical; Signal-anchor for type II membrane protein membrane pass occupies residues Leu-38–Val-58. Residues Gln-59–Ala-404 are Extracellular-facing. Asn-80 carries N-linked (GlcNAc...) asparagine glycosylation. 7 consecutive repeat copies span residues Lys-96–Ser-118, Lys-119–Ser-141, Lys-142–Ser-164, Lys-165–Ser-187, Lys-188–Ser-210, Lys-211–Ser-233, and Lys-234–Pro-257. The tract at residues Lys-96–Pro-257 is 7 X approximate tandem repeats. 3 disulfide bridges follow: Cys-256–Cys-267, Cys-284–Cys-377, and Cys-356–Cys-369. The region spanning Phe-263–Lys-378 is the C-type lectin domain. Glu-347, Asn-349, Val-351, Glu-354, Asn-365, and Asp-366 together coordinate Ca(2+).

As to quaternary structure, homotetramer. Interacts with C1QBP; the interaction is indicative for a C1q:C1QBP:CD209 signaling complex. Interacts with ICAM2 and ICAM3 by binding to mannose-like carbohydrates. Interacts (via C-type lectin domain) with CEACAM1 (via Lewis X moieties); this interaction is regulated by the glycosylation pattern of CEACAM1 on cell types and regulates contact between dendritic cells and neutrophils. (Microbial infection) Interacts with HIV-1 and HIV-2 gp120. In terms of assembly, (Microbial infection) Interacts with ebolavirus envelope glycoproteins. As to quaternary structure, (Microbial infection) Interacts with cytomegalovirus gB protein. (Microbial infection) Interacts with HCV E2 protein. In terms of assembly, (Microbial infection) Interacts with dengue virus major envelope protein E. As to quaternary structure, (Microbial infection) Interacts with measles hemagglutinin. (Microbial infection) Interacts with herpes simplex virus 1 surface proteins. In terms of assembly, (Microbial infection) Interacts with Influenzavirus A hemagglutinin. As to quaternary structure, (Microbial infection) Interacts with SARS-CoV spike glycoprotein. (Microbial infection) Interacts with Japanese encephalitis virus E protein. In terms of assembly, (Microbial infection) Interacts with Lassa virus Glycoprotein. As to quaternary structure, (Microbial infection) Interacts with marburg virus glycoprotein. (Microbial infection) Interacts with Respiratory syncytial virus glycoprotein G. In terms of assembly, (Microbial infection) Interacts with Rift valley fever virus and uukuniemi virus envelope glycoprotein. As to quaternary structure, (Microbial infection) Interacts with west-nile virus envelope glycoprotein. (Microbial infection) Interacts with whole M.bovis cells in a Ca(2+)-dependent and independent manner; in vitro experiments suggest it interacts with CH60.1 (groL1), DnaK, GADPH (gap) and LrpG. As to expression, predominantly expressed in dendritic cells and in DC-residing tissues. Also found in placental macrophages, endothelial cells of placental vascular channels, peripheral blood mononuclear cells, and THP-1 monocytes.

The protein resides in the cell membrane. It is found in the secreted. In terms of biological role, pathogen-recognition receptor expressed on the surface of immature dendritic cells (DCs) and involved in initiation of primary immune response. Thought to mediate the endocytosis of pathogens which are subsequently degraded in lysosomal compartments. The receptor returns to the cell membrane surface and the pathogen-derived antigens are presented to resting T-cells via MHC class II proteins to initiate the adaptive immune response. Its function is as follows. On DCs it is a high affinity receptor for ICAM2 and ICAM3 by binding to mannose-like carbohydrates. May act as a DC rolling receptor that mediates transendothelial migration of DC presursors from blood to tissues by binding endothelial ICAM2. Seems to regulate DC-induced T-cell proliferation by binding to ICAM3 on T-cells in the immunological synapse formed between DC and T-cells. Functionally, (Microbial infection) Acts as an attachment receptor for HIV-1 and HIV-2. (Microbial infection) Acts as an attachment receptor for Ebolavirus. In terms of biological role, (Microbial infection) Acts as an attachment receptor for Cytomegalovirus. Its function is as follows. (Microbial infection) Acts as an attachment receptor for HCV. Functionally, (Microbial infection) Acts as an attachment receptor for Dengue virus. (Microbial infection) Acts as an attachment receptor for Measles virus. In terms of biological role, (Microbial infection) Acts as an attachment receptor for Herpes simplex virus 1. Its function is as follows. (Microbial infection) Acts as an attachment receptor for Influenzavirus A. Functionally, (Microbial infection) Acts as an attachment receptor for SARS-CoV. (Microbial infection) Acts as an attachment receptor for Japanese encephalitis virus. In terms of biological role, (Microbial infection) Acts as an attachment receptor for Lassa virus. Acts as an attachment receptor for Marburg virusn. Its function is as follows. (Microbial infection) Acts as an attachment receptor for Respiratory syncytial virus. Functionally, (Microbial infection) Acts as an attachment receptor for Rift valley fever virus and uukuniemi virus. (Microbial infection) Acts as an attachment receptor for West-nile virus. In terms of biological role, (Microbial infection) Probably recognizes in a calcium-dependent manner high mannose N-linked oligosaccharides in a variety of bacterial pathogen antigens, including Leishmania pifanoi LPG, Lewis-x antigen in Helicobacter pylori LPS, mannose in Klebsiella pneumonae LPS, di-mannose and tri-mannose in Mycobacterium tuberculosis ManLAM and Lewis-x antigen in Schistosoma mansoni SEA. Recognition of M.tuberculosis by dendritic cells occurs partially via this molecule. The polypeptide is CD209 antigen (CD209) (Homo sapiens (Human)).